The primary structure comprises 494 residues: Alpha-amylase 2 (494 aa).

The N-terminal stretch at 1-18 (MFLAKSIVCLALLAVANA) is a signal peptide. An intrachain disulfide couples Cys-46 to Cys-102. Ca(2+)-binding residues include Asn-116, Arg-165, and Asp-174. Cys-153 and Cys-167 are oxidised to a cystine. Arg-202 provides a ligand contact to chloride. Asp-204 (nucleophile) is an active-site residue. Position 208 (His-208) interacts with Ca(2+). Residue Glu-241 is the Proton donor of the active site. Residues Asn-304 and Arg-343 each coordinate chloride. The disordered stretch occupies residues 350–370 (FTDTDQGPPTTDGQNIASPSF). The span at 351-363 (TDTDQGPPTTDGQ) shows a compositional bias: low complexity. Intrachain disulfides connect Cys-376–Cys-382 and Cys-448–Cys-460.

The protein belongs to the glycosyl hydrolase 13 family. In terms of assembly, monomer. The cofactor is Ca(2+). It depends on chloride as a cofactor.

The enzyme catalyses Endohydrolysis of (1-&gt;4)-alpha-D-glucosidic linkages in polysaccharides containing three or more (1-&gt;4)-alpha-linked D-glucose units.. This is Alpha-amylase 2 (Amy58) from Drosophila ananassae (Fruit fly).